We begin with the raw amino-acid sequence, 227 residues long: Phosphoribosylformylglycinamidine synthase subunit PurQ (227 aa).

Positions 3–225 constitute a Glutamine amidotransferase type-1 domain; the sequence is FAVIVFPGSN…LKQWRETYVV (223 aa). Catalysis depends on cysteine 86, which acts as the Nucleophile. Active-site residues include histidine 194 and glutamate 196.

As to quaternary structure, part of the FGAM synthase complex composed of 1 PurL, 1 PurQ and 2 PurS subunits.

It is found in the cytoplasm. The enzyme catalyses N(2)-formyl-N(1)-(5-phospho-beta-D-ribosyl)glycinamide + L-glutamine + ATP + H2O = 2-formamido-N(1)-(5-O-phospho-beta-D-ribosyl)acetamidine + L-glutamate + ADP + phosphate + H(+). It carries out the reaction L-glutamine + H2O = L-glutamate + NH4(+). It participates in purine metabolism; IMP biosynthesis via de novo pathway; 5-amino-1-(5-phospho-D-ribosyl)imidazole from N(2)-formyl-N(1)-(5-phospho-D-ribosyl)glycinamide: step 1/2. Functionally, part of the phosphoribosylformylglycinamidine synthase complex involved in the purines biosynthetic pathway. Catalyzes the ATP-dependent conversion of formylglycinamide ribonucleotide (FGAR) and glutamine to yield formylglycinamidine ribonucleotide (FGAM) and glutamate. The FGAM synthase complex is composed of three subunits. PurQ produces an ammonia molecule by converting glutamine to glutamate. PurL transfers the ammonia molecule to FGAR to form FGAM in an ATP-dependent manner. PurS interacts with PurQ and PurL and is thought to assist in the transfer of the ammonia molecule from PurQ to PurL. In Bacillus anthracis (strain A0248), this protein is Phosphoribosylformylglycinamidine synthase subunit PurQ.